The following is a 236-amino-acid chain: RNA-binding protein 24 (236 aa).

Residues 11 to 88 (TKIFVGGLPY…RKANVNLAYL (78 aa)) enclose the RRM domain. The tract at residues 175-199 (QYPYAASPAAAGYVTAGGYGYAVQQ) is necessary for interaction with EIF4E.

In terms of assembly, interacts with EIF4E; this interaction prevents EIF4E from binding to p53/TP53 mRNA and inhibits the assembly of translation initiation complex. (Microbial infection) Interacts with HCV mature core protein; this interaction, which enhances the interaction of Core with 5'-UTR may favor viral replication over translation. As to quaternary structure, (Microbial infection) Interacts with HCV Serine protease/helicase NS3. In terms of tissue distribution, expressed in fetal and adult heart and skeletal muscles.

The protein localises to the nucleus. It is found in the cytoplasm. Its function is as follows. Multifunctional RNA-binding protein involved in the regulation of pre-mRNA splicing, mRNA stability and mRNA translation important for cell fate decision and differentiation. Plays a major role in pre-mRNA alternative splicing regulation. Mediates preferentially muscle-specific exon inclusion in numerous mRNAs important for striated cardiac and skeletal muscle cell differentiation. Binds to intronic splicing enhancer (ISE) composed of stretches of GU-rich motifs localized in flanking intron of exon that will be included by alternative splicing. Involved in embryonic stem cell (ESC) transition to cardiac cell differentiation by promoting pre-mRNA alternative splicing events of several pluripotency and/or differentiation genes. Plays a role in the regulation of mRNA stability. Binds to 3'-untranslated region (UTR) AU-rich elements in target transcripts, such as CDKN1A and MYOG, leading to maintain their stabilities. Involved in myogenic differentiation by regulating MYOG levels. Binds to multiple regions in the mRNA 3'-UTR of TP63 isoform 2, hence inducing its destabilization. Also promotes the destabilization of the CHRM2 mRNA via its binding to a region in the coding sequence. Plays a role in the regulation of mRNA translation. Mediates repression of p53/TP53 mRNA translation through its binding to U-rich element in the 3'-UTR, hence preventing EIF4E from binding to p53/TP53 mRNA and translation initiation. Binds to a huge amount of mRNAs. Required for embryonic heart development, sarcomer and M-band formation in striated muscles. Together with RBM20, promotes the expression of short isoforms of PDLIM5/ENH in cardiomyocytes. (Microbial infection) Promotes hepatitis C virus (HCV) replication over translation through the inhibition of viral protein expression. Decreases viral translation by linking viral 5'- and 3'-UTRs, blocking 80S ribosome assembly on the viral IRES and enhancing the interaction of the mature core protein and 5'-UTR. The chain is RNA-binding protein 24 from Homo sapiens (Human).